The chain runs to 152 residues: MFRGATLVNLDSKGRLAVPTRHREKLNEESAGLMVCTIDLHQPCLLLYPLPAWEIIEQKLSRLSSMNPAERRVQRLLLGHASECQMDGAGRILLAPTLRQHAGLSKEVMLVGQFNKFELWDEQTWYQQVKDDIDAELSAELPLTDRLQDLSL.

2 consecutive SpoVT-AbrB domains span residues 5-52 (ATLV…PLPA) and 81-124 (ASEC…DEQT).

The protein belongs to the MraZ family. As to quaternary structure, forms oligomers.

It is found in the cytoplasm. The protein localises to the nucleoid. Functionally, negatively regulates its own expression and that of the subsequent genes in the proximal part of the division and cell wall (dcw) gene cluster. Acts by binding directly to DNA. May also regulate the expression of genes outside the dcw cluster. The sequence is that of Transcriptional regulator MraZ from Sodalis glossinidius (strain morsitans).